The chain runs to 295 residues: uncharacterized protein (295 aa).

Positions 1–58 (MESGDLRVFQMVAREGTITKAALQLGYVQSNVTARIQQLEAELGTTLFLRHNRGMTLS) constitute an HTH lysR-type domain. Residues 18 to 37 (ITKAALQLGYVQSNVTARIQ) constitute a DNA-binding region (H-T-H motif).

It belongs to the LysR transcriptional regulatory family.

This is an uncharacterized protein from Bacillus subtilis (strain 168).